Here is a 231-residue protein sequence, read N- to C-terminus: Small ribosomal subunit protein uS3 (231 aa).

The KH type-2 domain maps to 39 to 107; it reads IRELLHKELK…DVVINIVEIR (69 aa).

It belongs to the universal ribosomal protein uS3 family. Part of the 30S ribosomal subunit. Forms a tight complex with proteins S10 and S14.

In terms of biological role, binds the lower part of the 30S subunit head. Binds mRNA in the 70S ribosome, positioning it for translation. This is Small ribosomal subunit protein uS3 from Nitrobacter hamburgensis (strain DSM 10229 / NCIMB 13809 / X14).